Here is an 815-residue protein sequence, read N- to C-terminus: RNA-binding protein 5 (815 aa).

Positions 1–93 (MGSDKRVSRT…EHDYRHDISD (93 aa)) are disordered. 5 positions are modified to phosphoserine: Ser-18, Ser-59, Ser-69, Ser-72, and Ser-78. An RRM 1 domain is found at 98–178 (KTIMLRGLPI…KHIAMHYSNP (81 aa)). The RanBP2-type zinc finger occupies 181 to 210 (KFEDWLCNKCCLNNFRKRLKCFRCGADKFD). Residues 231–315 (DTIILRNIAP…KTIGVDFAKS (85 aa)) form the RRM 2 domain. The interval 321 to 809 (VLSDGNRVSA…KDAVRKAMFA (489 aa)) is required for interaction with U2AF2. Polar residues predominate over residues 411–422 (QSPQLYNQTSNP). Disordered regions lie at residues 411–468 (QSPQ…DESS) and 507–540 (PAAE…AQQI). Residues 426-446 (PTEEAQPSTSTSTQAPAASPT) are compositionally biased toward low complexity. Ser-444 bears the Phosphoserine mark. Positions 452 to 535 (TKYAVPDTST…KEKKEKPKSK (84 aa)) are sufficient for interaction with ACIN1, PRPF8, SFRS3, SNRPB, SNRPN, SNRNP70 and SNRNP200. Residues Ser-621 and Ser-624 each carry the phosphoserine modification. The C2H2-type; atypical zinc finger occupies 647-677 (MACLLCRRQFPNKDALVRHQQLSDLHKQNMD). Residues 743–789 (HSNIGNKMLQAMGWREGSGLGRKCQGITAPIEAQVRLKGAGLGAKGS) enclose the G-patch domain.

This sequence belongs to the RBM5/RBM10 family. In terms of assembly, component of the spliceosome A complex (also known as the prespliceosome). Appears to dissociate from the spliceosome upon formation of the spliceosome B complex (also known as the precatalytic spliceosome), in which the heterotrimeric U4/U6.U5 snRNPs are bound. Interacts with U2AF2; this interaction is direct. Also interacts with ACIN1, PRPF8, SFRS3, SNRPB, SNRPN, SNRNP70 and SNRNP200; these interactions may be indirect. Isoform 5 is widely expressed in normal tissues and is expressed at increased levels in T-leukemic cell lines.

It localises to the nucleus. Its function is as follows. Component of the spliceosome A complex. Binds to ssRNA containing the consensus sequence 5'-AGGUAA-3'. Regulates alternative splicing of a number of mRNAs. May modulate splice site pairing after recruitment of the U1 and U2 snRNPs to the 5' and 3' splice sites of the intron. May both positively and negatively regulate apoptosis by regulating the alternative splicing of several genes involved in this process, including FAS and CASP2/caspase-2. In the case of FAS, promotes exclusion of exon 6 thereby producing a soluble form of FAS that inhibits apoptosis. In the case of CASP2/caspase-2, promotes exclusion of exon 9 thereby producing a catalytically active form of CASP2/Caspase-2 that induces apoptosis. The chain is RNA-binding protein 5 (RBM5) from Homo sapiens (Human).